The chain runs to 210 residues: Thymidylate kinase (210 aa).

Residue 10 to 17 (GPEGAGKS) coordinates ATP.

The protein belongs to the thymidylate kinase family.

It catalyses the reaction dTMP + ATP = dTDP + ADP. Its function is as follows. Phosphorylation of dTMP to form dTDP in both de novo and salvage pathways of dTTP synthesis. The sequence is that of Thymidylate kinase from Ectopseudomonas mendocina (strain ymp) (Pseudomonas mendocina).